Reading from the N-terminus, the 252-residue chain is Phosphoglycolate phosphatase (252 aa).

The active-site Nucleophile is D13. D13, D15, and D192 together coordinate Mg(2+).

This sequence belongs to the HAD-like hydrolase superfamily. CbbY/CbbZ/Gph/YieH family. In terms of assembly, monomer. Mg(2+) is required as a cofactor. The cofactor is chloride.

It carries out the reaction 2-phosphoglycolate + H2O = glycolate + phosphate. The protein operates within organic acid metabolism; glycolate biosynthesis; glycolate from 2-phosphoglycolate: step 1/1. Its function is as follows. Specifically catalyzes the dephosphorylation of 2-phosphoglycolate. Is involved in the dissimilation of the intracellular 2-phosphoglycolate formed during the DNA repair of 3'-phosphoglycolate ends, a major class of DNA lesions induced by oxidative stress. This chain is Phosphoglycolate phosphatase, found in Escherichia coli O157:H7.